Reading from the N-terminus, the 123-residue chain is Large ribosomal subunit protein uL18 (123 aa).

This sequence belongs to the universal ribosomal protein uL18 family. Part of the 50S ribosomal subunit; part of the 5S rRNA/L5/L18/L25 subcomplex. Contacts the 5S and 23S rRNAs.

In terms of biological role, this is one of the proteins that bind and probably mediate the attachment of the 5S RNA into the large ribosomal subunit, where it forms part of the central protuberance. The chain is Large ribosomal subunit protein uL18 from Wolbachia pipientis wMel.